Here is a 123-residue protein sequence, read N- to C-terminus: Ig heavy chain V region HPCM6 (123 aa).

In terms of domain architecture, Ig-like spans 1–114; the sequence is EVKLVESGGG…YPHWYFDVWG (114 aa).

This chain is Ig heavy chain V region HPCM6, found in Mus musculus (Mouse).